The chain runs to 273 residues: Shikimate dehydrogenase (NADP(+)) (273 aa).

Shikimate-binding positions include 15-17 and Thr62; that span reads SQS. Lys66 (proton acceptor) is an active-site residue. Glu78 lines the NADP(+) pocket. Shikimate is bound by residues Asn87 and Asp102. Residues 127–131, 151–156, and Met215 each bind NADP(+); these read GAGGA and NRTVTK. Tyr217 contributes to the shikimate binding site. Gly239 is an NADP(+) binding site.

This sequence belongs to the shikimate dehydrogenase family. In terms of assembly, homodimer.

The catalysed reaction is shikimate + NADP(+) = 3-dehydroshikimate + NADPH + H(+). It participates in metabolic intermediate biosynthesis; chorismate biosynthesis; chorismate from D-erythrose 4-phosphate and phosphoenolpyruvate: step 4/7. Involved in the biosynthesis of the chorismate, which leads to the biosynthesis of aromatic amino acids. Catalyzes the reversible NADPH linked reduction of 3-dehydroshikimate (DHSA) to yield shikimate (SA). The chain is Shikimate dehydrogenase (NADP(+)) from Laribacter hongkongensis (strain HLHK9).